The sequence spans 269 residues: Zinc import ATP-binding protein ZnuC (269 aa).

The region spanning 6–221 is the ABC transporter domain; that stretch reads VRLTQVGVSF…PAFVELFGQD (216 aa). ATP is bound at residue 38-45; that stretch reads GPNGAGKT.

It belongs to the ABC transporter superfamily. Zinc importer (TC 3.A.1.15.5) family. As to quaternary structure, the complex is composed of two ATP-binding proteins (ZnuC), two transmembrane proteins (ZnuB) and a solute-binding protein (ZnuA).

It is found in the cell inner membrane. The enzyme catalyses Zn(2+)(out) + ATP(in) + H2O(in) = Zn(2+)(in) + ADP(in) + phosphate(in) + H(+)(in). Its function is as follows. Part of the ABC transporter complex ZnuABC involved in zinc import. Responsible for energy coupling to the transport system. In Pseudomonas aeruginosa (strain UCBPP-PA14), this protein is Zinc import ATP-binding protein ZnuC.